The chain runs to 253 residues: Phosphoadenosine 5'-phosphosulfate reductase (253 aa).

The active-site Nucleophile; cysteine thiosulfonate intermediate is cysteine 242.

The protein belongs to the PAPS reductase family. CysH subfamily.

Its subcellular location is the cytoplasm. The enzyme catalyses [thioredoxin]-disulfide + sulfite + adenosine 3',5'-bisphosphate + 2 H(+) = [thioredoxin]-dithiol + 3'-phosphoadenylyl sulfate. It functions in the pathway sulfur metabolism; hydrogen sulfide biosynthesis; sulfite from sulfate: step 3/3. Functionally, catalyzes the formation of sulfite from phosphoadenosine 5'-phosphosulfate (PAPS) using thioredoxin as an electron donor. The chain is Phosphoadenosine 5'-phosphosulfate reductase from Vibrio cholerae serotype O1 (strain ATCC 39541 / Classical Ogawa 395 / O395).